The primary structure comprises 238 residues: Ribitol-5-phosphate cytidylyltransferase (238 aa).

CTP contacts are provided by residues 7–10 and 80–86; these read FAGG and GETGQES.

This sequence belongs to the IspD/TarI cytidylyltransferase family. TarI subfamily.

The enzyme catalyses D-ribitol 5-phosphate + CTP + H(+) = CDP-L-ribitol + diphosphate. In terms of biological role, catalyzes the transfer of the cytidylyl group of CTP to D-ribitol 5-phosphate. This is Ribitol-5-phosphate cytidylyltransferase from Vibrio parahaemolyticus serotype O3:K6 (strain RIMD 2210633).